Consider the following 396-residue polypeptide: Proteasome-activating nucleotidase (396 aa).

Residues 16-57 (VTYLKRRIRQLELQVRMLEADKERLERELSRLRSEMSRLRQP) are a coiled coil. ATP is bound by residues 181-186 (GCGKTL) and His-320. A docks into pockets in the proteasome alpha-ring to cause gate opening region spans residues 394–396 (IYG).

It belongs to the AAA ATPase family. In terms of assembly, homohexamer. The hexameric complex has a two-ring architecture resembling a top hat that caps the 20S proteasome core at one or both ends. Upon ATP-binding, the C-terminus of PAN interacts with the alpha-rings of the proteasome core by binding to the intersubunit pockets.

The protein localises to the cytoplasm. Functionally, ATPase which is responsible for recognizing, binding, unfolding and translocation of substrate proteins into the archaeal 20S proteasome core particle. Is essential for opening the gate of the 20S proteasome via an interaction with its C-terminus, thereby allowing substrate entry and access to the site of proteolysis. Thus, the C-termini of the proteasomal ATPase function like a 'key in a lock' to induce gate opening and therefore regulate proteolysis. Unfolding activity requires energy from ATP hydrolysis, whereas ATP binding alone promotes ATPase-20S proteasome association which triggers gate opening, and supports translocation of unfolded substrates. The protein is Proteasome-activating nucleotidase of Pyrococcus furiosus (strain ATCC 43587 / DSM 3638 / JCM 8422 / Vc1).